Here is a 533-residue protein sequence, read N- to C-terminus: Putative replication factor C large subunit (533 aa).

A compositionally biased stretch (polar residues) spans 1–11 (MSKTAKNTKTI). The interval 1–31 (MSKTAKNTKTIKSVKSVNKDNKPNKDNKDDK) is disordered. Over residues 17–31 (VNKDNKPNKDNKDDK) the composition is skewed to basic and acidic residues.

The protein belongs to the activator 1 large subunit family.

Its function is as follows. Part of the RFC clamp loader complex which loads the PCNA sliding clamp onto DNA. This is Putative replication factor C large subunit from Acanthamoeba polyphaga (Amoeba).